Consider the following 388-residue polypeptide: Dual-specificity RNA methyltransferase RlmN (388 aa).

The active-site Proton acceptor is Glu-109. The 240-residue stretch at 115 to 354 (EDDRATLCVS…TIVRKTRGDD (240 aa)) folds into the Radical SAM core domain. The cysteines at positions 122 and 359 are disulfide-linked. [4Fe-4S] cluster-binding residues include Cys-129, Cys-133, and Cys-136. S-adenosyl-L-methionine-binding positions include 183 to 184 (GE), Ser-215, 237 to 239 (SLH), and Asn-316. Cys-359 functions as the S-methylcysteine intermediate in the catalytic mechanism.

Belongs to the radical SAM superfamily. RlmN family. [4Fe-4S] cluster serves as cofactor.

The protein localises to the cytoplasm. The catalysed reaction is adenosine(2503) in 23S rRNA + 2 reduced [2Fe-2S]-[ferredoxin] + 2 S-adenosyl-L-methionine = 2-methyladenosine(2503) in 23S rRNA + 5'-deoxyadenosine + L-methionine + 2 oxidized [2Fe-2S]-[ferredoxin] + S-adenosyl-L-homocysteine. It catalyses the reaction adenosine(37) in tRNA + 2 reduced [2Fe-2S]-[ferredoxin] + 2 S-adenosyl-L-methionine = 2-methyladenosine(37) in tRNA + 5'-deoxyadenosine + L-methionine + 2 oxidized [2Fe-2S]-[ferredoxin] + S-adenosyl-L-homocysteine. Functionally, specifically methylates position 2 of adenine 2503 in 23S rRNA and position 2 of adenine 37 in tRNAs. m2A2503 modification seems to play a crucial role in the proofreading step occurring at the peptidyl transferase center and thus would serve to optimize ribosomal fidelity. The chain is Dual-specificity RNA methyltransferase RlmN from Salmonella arizonae (strain ATCC BAA-731 / CDC346-86 / RSK2980).